The sequence spans 127 residues: Modulator protein MzrA (127 aa).

Residues 1-10 (MVISPLALRR) are Cytoplasmic-facing. A helical membrane pass occupies residues 11-31 (LSYGLIALVLLSALILVWTAL). Topologically, residues 32–127 (QRQESTLAIR…RLRDTSHRFG (96 aa)) are periplasmic.

It belongs to the MzrA family. In terms of assembly, interacts with EnvZ.

The protein localises to the cell inner membrane. In terms of biological role, modulates the activity of the EnvZ/OmpR two-component regulatory system, probably by directly modulating EnvZ enzymatic activity and increasing stability of phosphorylated OmpR. In Enterobacter sp. (strain 638), this protein is Modulator protein MzrA.